Here is a 311-residue protein sequence, read N- to C-terminus: MTRVEELLSQIKNLKTEKNAIILGHNYMEYSVQLVSDFTGDSYDLAVKAMKTNAKIILFAGVYFMAEQASALNPNKKVLSPDPNAGCTLSDSLDVKTLQEYKEKYPNAPVVLYINTSIYAKALADYIVTSSTAVKVVQKLNADTILFGPDANLANYVQQKVPNKKIIKVPPNGRCIVHANYTKQLVELARKKYPNALLMAHPEAPLEILESADFVGSTNQMIQFSKENKNEEFIVATEIGMINALKIKNPSKKFYPLVTTEACACARCPYMNMINLEKVKRSLEEEVYEVKVPEDIAERVKRAFENTMKLL.

Residues H25 and S42 each coordinate iminosuccinate. C87 is a binding site for [4Fe-4S] cluster. Residues 113–115 (YIN) and S130 each bind iminosuccinate. C175 contacts [4Fe-4S] cluster. Residues 201–203 (HPE) and T218 contribute to the iminosuccinate site. C268 is a binding site for [4Fe-4S] cluster.

This sequence belongs to the quinolinate synthase family. Type 2 subfamily. It depends on [4Fe-4S] cluster as a cofactor.

It is found in the cytoplasm. It carries out the reaction iminosuccinate + dihydroxyacetone phosphate = quinolinate + phosphate + 2 H2O + H(+). The protein operates within cofactor biosynthesis; NAD(+) biosynthesis; quinolinate from iminoaspartate: step 1/1. Its function is as follows. Catalyzes the condensation of iminoaspartate with dihydroxyacetone phosphate to form quinolinate. The polypeptide is Quinolinate synthase (Saccharolobus solfataricus (strain ATCC 35092 / DSM 1617 / JCM 11322 / P2) (Sulfolobus solfataricus)).